Reading from the N-terminus, the 461-residue chain is Ribonuclease inhibitor (461 aa).

Position 2 is an N-acetylserine (Ser-2). A 2 X 5 AA tandem repeats of S-L-D-I-Q region spans residues 2–11 (SLDIQSLDIQ). 15 LRR repeats span residues 20-48 (WAEL…CKDI), 49-76 (SSAL…VHCV), 77-105 (LQGL…CGVL), 106-133 (SSTL…LQLL), 134-162 (CEGL…CKPL), 163-190 (ASVL…VRVL), 191-219 (CQGL…CRDL), 220-247 (CGIV…MAEL), 248-276 (CPGL…CGDL), 277-304 (CRVL…ARLL), 305-333 (CETL…CSHF), 334-361 (SSVL…VQEL), 362-390 (CQGL…CSSL), 391-418 (AATL…ILQL), and 419-447 (VESV…EDRL). The residue at position 91 (Ser-91) is a Phosphoserine.

In terms of assembly, forms high-affinity heterodimers with RNASE1, ANG and RNASE2.

The protein localises to the cytoplasm. It is found in the nucleus. Its function is as follows. Ribonuclease inhibitor which inhibits RNASE1, RNASE2 and angiogenin (ANG). May play a role in redox homeostasis. Required to inhibit the cytotoxic tRNA ribonuclease activity of ANG in the cytoplasm in absence of stress. Relocates to the nucleus in response to stress, relieving inhibition of ANG in the cytoplasm, and inhibiting the angiogenic activity of ANG in the nucleus. This chain is Ribonuclease inhibitor (RNH1), found in Pan troglodytes (Chimpanzee).